The sequence spans 57 residues: MAVPKRRMSRANTRSRRAQWKAEKTELVGVTVAGQRHKVPRRLLKAARLDLIDLDRR.

Residues 1 to 19 show a composition bias toward basic residues; it reads MAVPKRRMSRANTRSRRAQ. The disordered stretch occupies residues 1–20; the sequence is MAVPKRRMSRANTRSRRAQW.

It belongs to the bacterial ribosomal protein bL32 family.

This chain is Large ribosomal subunit protein bL32, found in Mycobacterium avium (strain 104).